The sequence spans 285 residues: Sulfotransferase 2A1 (285 aa).

3'-phosphoadenylyl sulfate-binding residues include lysine 44, serine 45, glycine 46, threonine 47, asparagine 48, and tryptophan 49. The active-site Proton acceptor is histidine 99. 3'-phosphoadenylyl sulfate contacts are provided by arginine 121, serine 129, tyrosine 184, serine 218, methionine 223, arginine 247, lysine 248, and glycine 249. Serine 251 is modified (phosphoserine).

Belongs to the sulfotransferase 1 family. In terms of assembly, homodimer. In terms of tissue distribution, predominanly expressed in liver. Detected also in adrenal gland and in jejunum.

It localises to the cytoplasm. The protein localises to the cytosol. The enzyme catalyses an alcohol + 3'-phosphoadenylyl sulfate = an alkyl sulfate + adenosine 3',5'-bisphosphate + H(+). It carries out the reaction 3beta-hydroxyandrost-5-en-17-one + 3'-phosphoadenylyl sulfate = dehydroepiandrosterone 3-sulfate + adenosine 3',5'-bisphosphate + H(+). It catalyses the reaction taurolithocholate + 3'-phosphoadenylyl sulfate = taurolithocholate 3-sulfate + adenosine 3',5'-bisphosphate + H(+). The catalysed reaction is lithocholate + 3'-phosphoadenylyl sulfate = lithocholate sulfate + adenosine 3',5'-bisphosphate + H(+). The enzyme catalyses (24S)-hydroxycholesterol + 3'-phosphoadenylyl sulfate = (24S)-hydroxycholesterol 24-sulfate + adenosine 3',5'-bisphosphate + H(+). It carries out the reaction (24S)-hydroxycholesterol + 3'-phosphoadenylyl sulfate = (24S)-hydroxycholesterol 3-sulfate + adenosine 3',5'-bisphosphate + H(+). It catalyses the reaction (24S)-hydroxycholesterol 24-sulfate + 3'-phosphoadenylyl sulfate = (24S)-hydroxycholesterol 3,24-disulfate + adenosine 3',5'-bisphosphate + H(+). The catalysed reaction is pregnenolone + 3'-phosphoadenylyl sulfate = pregnenolone sulfate + adenosine 3',5'-bisphosphate + H(+). The enzyme catalyses androsterone + 3'-phosphoadenylyl sulfate = androsterone 3alpha-sulfate + adenosine 3',5'-bisphosphate + H(+). Sulfotransferase that utilizes 3'-phospho-5'-adenylyl sulfate (PAPS) as sulfonate donor to catalyze the sulfonation of steroids and bile acids in the liver and adrenal glands. Mediates the sulfation of a wide range of steroids and sterols, including pregnenolone, androsterone, DHEA, bile acids, cholesterol and as well many xenobiotics that contain alcohol and phenol functional groups. Sulfonation increases the water solubility of most compounds, and therefore their renal excretion, but it can also result in bioactivation to form active metabolites. Plays an important role in maintening steroid and lipid homeostasis. Plays a key role in bile acid metabolism. In addition, catalyzes the metabolic activation of potent carcinogenic polycyclic arylmethanols. The chain is Sulfotransferase 2A1 (SULT2A1) from Macaca fascicularis (Crab-eating macaque).